The following is a 101-amino-acid chain: NAD(P)H-quinone oxidoreductase subunit 4L, chloroplastic (101 aa).

A run of 3 helical transmembrane segments spans residues 2-22, 32-52, and 61-81; these read YIENFLLLASALFCIGIYGLL, MCLELCLNAININFIAFSNFI, and VIAIFIMTIAAAEAAIGLALV.

Belongs to the complex I subunit 4L family. NDH is composed of at least 16 different subunits, 5 of which are encoded in the nucleus.

It is found in the plastid. The protein resides in the chloroplast thylakoid membrane. It carries out the reaction a plastoquinone + NADH + (n+1) H(+)(in) = a plastoquinol + NAD(+) + n H(+)(out). The enzyme catalyses a plastoquinone + NADPH + (n+1) H(+)(in) = a plastoquinol + NADP(+) + n H(+)(out). NDH shuttles electrons from NAD(P)H:plastoquinone, via FMN and iron-sulfur (Fe-S) centers, to quinones in the photosynthetic chain and possibly in a chloroplast respiratory chain. The immediate electron acceptor for the enzyme in this species is believed to be plastoquinone. Couples the redox reaction to proton translocation, and thus conserves the redox energy in a proton gradient. This chain is NAD(P)H-quinone oxidoreductase subunit 4L, chloroplastic, found in Mesostigma viride (Green alga).